Reading from the N-terminus, the 247-residue chain is Adenosylcobinamide-GDP ribazoletransferase (247 aa).

The next 5 membrane-spanning stretches (helical) occupy residues 34 to 54, 59 to 79, 113 to 133, 138 to 158, and 194 to 214; these read IITF…VFMV, CGAP…TGGF, GGLA…ELAL, ILAS…LLMY, and VLLP…AIFI.

It belongs to the CobS family. Mg(2+) serves as cofactor.

It is found in the cell inner membrane. The catalysed reaction is alpha-ribazole + adenosylcob(III)inamide-GDP = adenosylcob(III)alamin + GMP + H(+). The enzyme catalyses alpha-ribazole 5'-phosphate + adenosylcob(III)inamide-GDP = adenosylcob(III)alamin 5'-phosphate + GMP + H(+). Its pathway is cofactor biosynthesis; adenosylcobalamin biosynthesis; adenosylcobalamin from cob(II)yrinate a,c-diamide: step 7/7. Its function is as follows. Joins adenosylcobinamide-GDP and alpha-ribazole to generate adenosylcobalamin (Ado-cobalamin). Also synthesizes adenosylcobalamin 5'-phosphate from adenosylcobinamide-GDP and alpha-ribazole 5'-phosphate. This Escherichia coli O81 (strain ED1a) protein is Adenosylcobinamide-GDP ribazoletransferase.